The sequence spans 1760 residues: Chitin synthase A (1760 aa).

N-linked (GlcNAc...) asparagine glycosylation occurs at asparagine 157. The next 2 membrane-spanning stretches (helical) occupy residues 729–749 (IWTGFVWALTFWIPSFVLRFV) and 765–785 (LVLVFLILLFNAIVCFYIIAF). N-linked (GlcNAc...) asparagine glycosylation is found at asparagine 876 and asparagine 996. Residues 1027–1047 (ILLAFTCLICAVILVKFLAAL) form a helical membrane-spanning segment. A glycan (N-linked (GlcNAc...) asparagine) is linked at asparagine 1392. 3 helical membrane passes run 1417 to 1437 (FVVLVDLLGTIILPATCVYLG), 1449 to 1469 (IPIISIAILAGVYGLQAIIFI), and 1477 to 1497 (IGWMIIYICAYPIYSFVLPMY). Residues asparagine 1557, asparagine 1645, and asparagine 1650 are each glycosylated (N-linked (GlcNAc...) asparagine). The disordered stretch occupies residues 1670–1691 (DNLLGVPRPNSRSPVGGYTSRP). Residues 1702 to 1758 (GPDEMAITDAIRSCLAEVDLDTVTKKQVRALVEQRLQATLTGDKRAFLDRQIDQELA) form the DEK-C domain.

Belongs to the chitin synthase family. Class V subfamily.

It is found in the cell membrane. The catalysed reaction is [(1-&gt;4)-N-acetyl-beta-D-glucosaminyl](n) + UDP-N-acetyl-alpha-D-glucosamine = [(1-&gt;4)-N-acetyl-beta-D-glucosaminyl](n+1) + UDP + H(+). Polymerizes chitin, a structural polymer of the cell wall and septum, by transferring the sugar moiety of UDP-GlcNAc to the non-reducing end of the growing chitin polymer. Plays an important role in cell-wall formation during both hyphal growth and conidiation. The sequence is that of Chitin synthase A from Aspergillus oryzae (strain ATCC 42149 / RIB 40) (Yellow koji mold).